The following is a 616-amino-acid chain: Membrane protein insertase YidC (616 aa).

Residues 8 to 28 (MFVAIALSLVVLLGWHYFVTG) form a helical membrane-spanning segment. The disordered stretch occupies residues 33-85 (RQRQAAQSQTAQTGAPQTADGIPSPSPREGGPNAPAPGTLPGAAAQGPVSRED). Low complexity-rich tracts occupy residues 36–51 (QAAQ…PQTA) and 62–80 (GGPN…AQGP). 4 helical membrane-spanning segments follow: residues 386–406 (LLGN…LFFL), 460–480 (WPVL…FITI), 516–536 (YIPI…FIQM), and 551–571 (FAFM…GLVI).

It belongs to the OXA1/ALB3/YidC family. Type 1 subfamily. As to quaternary structure, interacts with the Sec translocase complex via SecD. Specifically interacts with transmembrane segments of nascent integral membrane proteins during membrane integration.

It is found in the cell inner membrane. Its function is as follows. Required for the insertion and/or proper folding and/or complex formation of integral membrane proteins into the membrane. Involved in integration of membrane proteins that insert both dependently and independently of the Sec translocase complex, as well as at least some lipoproteins. Aids folding of multispanning membrane proteins. The polypeptide is Membrane protein insertase YidC (Methylorubrum extorquens (strain PA1) (Methylobacterium extorquens)).